Reading from the N-terminus, the 967-residue chain is MFNGAVSLLFLFLAVVSARADPTFNDDVLGLIVFKAGLDDPLSKLSSWNSEDYDPCNWVGCTCDPATNRVSELRLDAFSLSGHIGRGLLRLQFLHTLVLSNNNLTGTLNPEFPHLGSLQVVDFSGNNLSGRIPDGFFEQCGSLRSVSLANNKLTGSIPVSLSYCSTLTHLNLSSNQLSGRLPRDIWFLKSLKSLDFSHNFLQGDIPDGLGGLYDLRHINLSRNWFSGDVPSDIGRCSSLKSLDLSENYFSGNLPDSMKSLGSCSSIRLRGNSLIGEIPDWIGDIATLEILDLSANNFTGTVPFSLGNLEFLKDLNLSANMLAGELPQTLSNCSNLISIDVSKNSFTGDVLKWMFTGNSESSSLSRFSLHKRSGNDTIMPIVGFLQGLRVLDLSSNGFTGELPSNIWILTSLLQLNMSTNSLFGSIPTGIGGLKVAEILDLSSNLLNGTLPSEIGGAVSLKQLHLHRNRLSGQIPAKISNCSALNTINLSENELSGAIPGSIGSLSNLEYIDLSRNNLSGSLPKEIEKLSHLLTFNISHNNITGELPAGGFFNTIPLSAVTGNPSLCGSVVNRSCLSVHPKPIVLNPNSSNPTNGPALTGQIRKSVLSISALIAIGAAAVIAIGVVAVTLLNVHARSSVSRHDAAAALALSVGETFSCSPSKDQEFGKLVMFSGEVDVFDTTGADALLNKDSELGRGGFGVVYKTSLQDGRPVAVKKLTVSGLIKSQEEFEREMRKLGKLRHKNVVEIKGYYWTQSLQLLIHEFVSGGSLYRHLHGDESVCLTWRQRFSIILGIARGLAFLHSSNITHYNMKATNVLIDAAGEAKVSDFGLARLLASALDRCVLSGKVQSALGYTAPEFACRTVKITDRCDVYGFGILVLEVVTGKRPVEYAEDDVVVLCETVREGLEEGRVEECVDPRLRGNFPAEEAIPVIKLGLVCGSQVPSNRPEMEEVVKILELIQCPSHDLE.

The N-terminal stretch at 1–20 (MFNGAVSLLFLFLAVVSARA) is a signal peptide. Topologically, residues 21–609 (DPTFNDDVLG…QIRKSVLSIS (589 aa)) are extracellular. 11 LRR repeats span residues 91–114 (LQFL…EFPH), 115–139 (LGSL…FFEQ), 141–164 (GSLR…LSYC), 165–189 (STLT…WFLK), 191–212 (LKSL…LGGL), 214–236 (DLRH…IGRC), 237–260 (SSLK…MKSL), 262–284 (SCSS…IGDI), 285–307 (ATLE…SLGN), 308–332 (LEFL…LSNC), and 334–356 (NLIS…MFTG). N-linked (GlcNAc...) asparagine glycans are attached at residues Asn-103 and Asn-127. Asn-171 is a glycosylation site (N-linked (GlcNAc...) asparagine). Residue Asn-219 is glycosylated (N-linked (GlcNAc...) asparagine). N-linked (GlcNAc...) asparagine glycans are attached at residues Asn-296, Asn-315, and Asn-331. Asn-374 is a glycosylation site (N-linked (GlcNAc...) asparagine). 7 LRR repeats span residues 384–408 (LQGL…IWIL), 410–432 (SLLQ…IGGL), 433–456 (KVAE…IGGA), 457–480 (VSLK…ISNC), 482–503 (ALNT…SIGS), 504–528 (LSNL…IEKL), and 530–552 (HLLT…GFFN). Residues Asn-415, Asn-446, Asn-479, Asn-487, Asn-516, Asn-535, Asn-540, Asn-571, and Asn-587 are each glycosylated (N-linked (GlcNAc...) asparagine). Residues 610-630 (ALIAIGAAAVIAIGVVAVTLL) form a helical membrane-spanning segment. Over 631-967 (NVHARSSVSR…LIQCPSHDLE (337 aa)) the chain is Cytoplasmic. Positions 687 to 959 (LNKDSELGRG…EEVVKILELI (273 aa)) constitute a Protein kinase domain. Residues 693–701 (LGRGGFGVV) and Lys-715 contribute to the ATP site.

It belongs to the protein kinase superfamily. Ser/Thr protein kinase family. Expressed in the vascular strands of cotyledons, the shoot apex, hypocotyls, roots, leaves, stems and flowers.

The protein resides in the cell membrane. In terms of biological role, leucine-rich repeat receptor-like protein kinase that may play a role in vascular tissues development. In Arabidopsis thaliana (Mouse-ear cress), this protein is Leucine-rich repeat receptor-like protein kinase PXC2.